We begin with the raw amino-acid sequence, 431 residues long: MGQLPGAGVFCRGGCGFSRLLAWCFLLVLSPQTPGSRGAEAVWTAYLNVSWRVPHTGVNRTVWELSEEGVYGQDSPLEPVAGVLVPPDGPGALNACNPHTNFTVPTVPGDWGSSVQVSWLALIQRGGGCTFADKIHLAYERGASGAVIFNFPGTRNEVIPMSHPGAGDIVAIMIGNLKGTKILQSIQRGIQVTMVIEVGKKHGPWVNHYSIFFVSVSFFIITAATVGYFIFYSARRLRNARAQSRKQRQLKADAKKAIGRLQLRTQKQGDKEIGPDGDSCAVCIELYKPNDLVRILTCNHVFHKTCVDPWLLEHRTCPMCKCDILKALGIEVDVEDGSVSLQVPVSNETSSNASPHEEDNRSETASSGYASVQGADEPPLEEHAHSANENLQLVNHEANSMAVDVVPHVDNPTFEEDESPDQETTVREIKS.

Residues 1-38 form the signal peptide; sequence MGQLPGAGVFCRGGCGFSRLLAWCFLLVLSPQTPGSRG. 3 N-linked (GlcNAc...) asparagine glycosylation sites follow: Asn-48, Asn-59, and Asn-101. In terms of domain architecture, PA spans 75–186; it reads SPLEPVAGVL…LKGTKILQSI (112 aa). A helical transmembrane segment spans residues 211-231; the sequence is IFFVSVSFFIITAATVGYFIF. The RING-type; atypical zinc-finger motif lies at 280-321; sequence CAVCIELYKPNDLVRILTCNHVFHKTCVDPWLLEHRTCPMCK. The segment covering 345 to 354 has biased composition (polar residues); sequence VSNETSSNAS. The interval 345 to 431 is disordered; the sequence is VSNETSSNAS…QETTVREIKS (87 aa).

In terms of processing, auto-ubiquitinated. Controls the development of T-cell clonal anergy by ubiquitination.

It localises to the cytoplasm. The protein localises to the endomembrane system. The protein resides in the cytoskeleton. Its subcellular location is the perinuclear region. It catalyses the reaction S-ubiquitinyl-[E2 ubiquitin-conjugating enzyme]-L-cysteine + [acceptor protein]-L-lysine = [E2 ubiquitin-conjugating enzyme]-L-cysteine + N(6)-ubiquitinyl-[acceptor protein]-L-lysine.. The protein operates within protein modification; protein ubiquitination. Its function is as follows. E3 ubiquitin-protein ligase that catalyzes 'Lys-27', 'Lys-48'- or 'Lys-63'-linked polyubiquitin chains formation and plays a role in different biological processes such as modulation of immune response, cytoskeletal dynamics or protein homeostasis. Inhibits IL2 and IL4 transcription, thereby playing an important role in the induction of the anergic phenotype, a long-term stable state of T-lymphocyte unresponsiveness to antigenic stimulation associated with the blockade of interleukin production. Ubiquitinates ARPC5 with 'Lys-48' linkages and COR1A with 'Lys-63' linkages leading to their degradation, down-regulation of these cytoskeletal components results in impaired lamellipodium formation and reduced accumulation of F-actin at the immunological synapse. Functions in the patterning of the dorsal ectoderm; sensitizes ectoderm to respond to neural-inducing signals. Plays a positive role in innate immune response by promoting 'Lys-63'-linked ubiquitination of TBK1 after RNA- or DNA-virus infection. Regulates alveolar macrophage activation and neutrophil infiltration by interacting with TLR4, targeting it for degradation, and inhibiting NF-kappa-B activation, hence decreasing pro-inflammatory cytokines. Negatively regulates the IL-3/STAT5 signaling pathway by facilitating 'Lys-27'-linked polyubiquitination of IL3RA leading to its degradation via lysosomal pathway. Directly regulates the N-glycosylation process in the endoplasmic reticulum by targeting the glycosyl-transferase RPN1 for ubiquitination and degradation. Other substrates targeted for degradation by RNF128 include transmembrane proteins CD40L, CD83 or the tetraspanin CD151. This chain is E3 ubiquitin-protein ligase RNF128 (RNF128), found in Bos taurus (Bovine).